The primary structure comprises 852 residues: Bifunctional isopimaradiene synthase, chloroplastic (852 aa).

The N-terminal 53 residues, 1 to 53 (HHLTANTQSIPHFSTTLNAGSSARKRRSLYLRWGKGSNKIIACVGEGATSVPY), are a transit peptide targeting the chloroplast. Lys-252 serves as a coordination point for substrate. Positions 385 and 387 each coordinate Mg(2+). The DXDD motif motif lies at 385–388 (DIDD). Lys-472 is a binding site for substrate. The Mg(2+) site is built by Asp-604, Asp-608, Asn-748, Thr-752, and Glu-756. Positions 604 to 608 (DDLYD) match the DDXXD motif motif.

This sequence belongs to the terpene synthase family. Tpsd subfamily. Requires Mg(2+) as cofactor.

It is found in the plastid. Its subcellular location is the chloroplast. The enzyme catalyses (2E,6E,10E)-geranylgeranyl diphosphate = (+)-copalyl diphosphate. It catalyses the reaction (+)-copalyl diphosphate = isopimara-7,15-diene + diphosphate. It functions in the pathway terpene metabolism; oleoresin biosynthesis. In terms of biological role, involved in defensive oleoresin formation in conifers in response to insect attack or other injury. Involved in diterpene (C20) olefins biosynthesis. Bifunctional enzyme that catalyzes two sequential cyclizations of geranylgeranyl diphosphate (GGPP) to isopimara-7,15-diene. This chain is Bifunctional isopimaradiene synthase, chloroplastic (TPS-ISO), found in Abies balsamea (Balsam fir).